A 374-amino-acid polypeptide reads, in one-letter code: Guanine nucleotide-binding protein subunit alpha-15 (374 aa).

The G-alpha domain occupies 41-374 (GELKLLLLGP…ARYLDEINLL (334 aa)). The segment at 44-57 (KLLLLGPGESGKST) is G1 motif. Residues 49-56 (GPGESGKS), 183-189 (LRSRMPT), 208-212 (DVGGQ), 277-280 (NKTD), and A346 each bind GTP. S56 is a Mg(2+) binding site. The G2 motif stretch occupies residues 181 to 189 (DVLRSRMPT). The residue at position 186 (R186) is an ADP-ribosylarginine; by cholera toxin. T189 is a binding site for Mg(2+). The G3 motif stretch occupies residues 204–213 (LRIVDVGGQK). The G4 motif stretch occupies residues 273–280 (ILFLNKTD). The tract at residues 344–349 (TCATDT) is G5 motif.

It belongs to the G-alpha family. G(q) subfamily. As to quaternary structure, g proteins are composed of 3 units; alpha, beta and gamma. The alpha chain contains the guanine nucleotide binding site. Specifically expressed in hematopoietic cells. Expressed in epididymis (at protein level).

In terms of biological role, guanine nucleotide-binding proteins (G proteins) are involved as modulators or transducers in various transmembrane signaling systems. In Homo sapiens (Human), this protein is Guanine nucleotide-binding protein subunit alpha-15 (GNA15).